Consider the following 520-residue polypeptide: Versicolorin B desaturase (520 aa).

A helical membrane pass occupies residues 22–42 (IFTTILSIFGIALSAVAAWGI). Asn266 and Asn426 each carry an N-linked (GlcNAc...) asparagine glycan. Cys462 contributes to the heme binding site.

The protein belongs to the cytochrome P450 family. Requires heme as cofactor.

Its subcellular location is the membrane. The catalysed reaction is versicolorin B + NADPH + O2 + H(+) = versicolorin A + NADP(+) + 2 H2O. The protein operates within mycotoxin biosynthesis. Versicolorin B desaturase; part of the fragmented gene cluster that mediates the biosynthesis of dothistromin (DOTH), a polyketide toxin very similar in structure to the aflatoxin precursor, versicolorin B. The first step of the pathway is the conversion of acetate to norsolorinic acid (NOR) and requires the fatty acid synthase subunits hexA and hexB, as well as the polyketide synthase pksA. PksA combines a hexanoyl starter unit and 7 malonyl-CoA extender units to synthesize the precursor NOR. The hexanoyl starter unit is provided to the acyl-carrier protein (ACP) domain by the fungal fatty acid synthase hexA/hexB. The second step is the conversion of NOR to averantin (AVN) and requires the norsolorinic acid ketoreductase nor1, which catalyzes the dehydration of norsolorinic acid to form (1'S)-averantin. The cytochrome P450 monooxygenase avnA then catalyzes the hydroxylation of AVN to 5'hydroxyaverantin (HAVN). The next step is performed by adhA that transforms HAVN to averufin (AVF). Averufin might then be converted to hydroxyversicolorone by cypX and avfA. Hydroxyversicolorone is further converted versiconal hemiacetal acetate (VHA) by moxY. VHA is then the substrate for the versiconal hemiacetal acetate esterase est1 to yield versiconal (VAL). Versicolorin B synthase vbsA then converts VAL to versicolorin B (VERB) by closing the bisfuran ring. Then, the activity of the versicolorin B desaturase verB leads to versicolorin A (VERA). DotB, a predicted chloroperoxidase, may perform epoxidation of the A-ring of VERA. Alternatively, a cytochrome P450, such as cypX or avnA could catalyze this step. It is also possible that another, uncharacterized, cytochrome P450 enzyme is responsible for this step. Opening of the epoxide could potentially be achieved by the epoxide hydrolase epoA. However, epoA seems not to be required for DOTH biosynthesis, but other epoxide hydrolases may have the ability to complement this hydrolysis. Alternatively, opening of the epoxide ring could be achieved non-enzymatically. The next step is the deoxygenation of ring A to yield the 5,8-dihydroxyanthraquinone which is most likely catalyzed by the NADPH dehydrogenase encoded by ver1. The last stages of DOTH biosynthesis are proposed to involve hydroxylation of the bisfuran. OrdB and norB might have oxidative roles here. An alternative possibility is that cytochrome P450 monoogenases such as avnA and cypX might perform these steps in addition to previously proposed steps. The sequence is that of Versicolorin B desaturase from Dothistroma septosporum (strain NZE10 / CBS 128990) (Red band needle blight fungus).